Here is a 758-residue protein sequence, read N- to C-terminus: Probable adenosylcobalamin-dependent ribonucleoside-triphosphate reductase (758 aa).

The cysteines at positions 194 and 459 are disulfide-linked. Positions 233 to 256 (IIIKGQLPPPPPQQQPQQQQQQHG) are disordered. Residues C448 and E450 contribute to the active site.

This sequence belongs to the class II ribonucleoside-triphosphate reductase family. In terms of assembly, monomer. It depends on adenosylcob(III)alamin as a cofactor.

The catalysed reaction is a 2'-deoxyribonucleoside 5'-triphosphate + [thioredoxin]-disulfide + H2O = a ribonucleoside 5'-triphosphate + [thioredoxin]-dithiol. In Dictyostelium discoideum (Social amoeba), this protein is Probable adenosylcobalamin-dependent ribonucleoside-triphosphate reductase (rtpR).